Reading from the N-terminus, the 1920-residue chain is rRNA biogenesis protein RRP5 (1920 aa).

Residues 1 to 65 (MVVPQKKFAN…GTSLSKKERE (65 aa)) form a disordered region. 15 S1 motif domains span residues 128 to 210 (GMKL…LSLR), 226 to 291 (GMVF…LSSD), 314 to 384 (GMMV…LTLS), 400 to 473 (GDIF…GTLK), 490 to 557 (GMVT…VTYK), 577 to 646 (GLVT…LSFM), 661 to 733 (GSIV…LSSK), 753 to 822 (NSVV…LSLK), 866 to 930 (GSLI…LSLR), 958 to 1031 (EVHQ…LLLD), 1054 to 1129 (GSVV…LSVK), 1153 to 1224 (GQCV…LVQR), 1260 to 1334 (GDIL…LSLR), 1369 to 1438 (DMGV…VTLK), and 1459 to 1529 (GDMI…LGMK). Disordered stretches follow at residues 1535–1555 (NGDD…ECDP) and 1605–1652 (TDFD…LEHH). Basic and acidic residues predominate over residues 1620–1652 (NKDEKSKRREKQKDKEEREKKIQAAEGRLLEHH). HAT repeat units lie at residues 1651–1683 (HHAP…FMLS), 1685–1722 (ADIE…LENE), 1726–1758 (PPEE…YERT), 1759–1791 (EQYK…SSLK), 1828–1860 (GVAD…QEIR), and 1862–1897 (GEDD…YEKS).

Highly expressed in flowers and at lower levels in roots, leaves, stems and siliques.

It is found in the nucleus. It localises to the nucleolus. Involved in the biogenesis of ribosomal RNA (rRNA). Required for the formation of 5.8S rRNA. Required for normal development of female gametophytes. The sequence is that of rRNA biogenesis protein RRP5 from Arabidopsis thaliana (Mouse-ear cress).